Reading from the N-terminus, the 631-residue chain is tRNA uridine 5-carboxymethylaminomethyl modification enzyme MnmG (631 aa).

FAD-binding positions include 13 to 18 (GGGHAG), Val-125, and Ser-180. NAD(+) is bound at residue 273-287 (GPRYCPSIEDKVMRF). Gln-370 lines the FAD pocket.

The protein belongs to the MnmG family. Homodimer. Heterotetramer of two MnmE and two MnmG subunits. FAD is required as a cofactor.

The protein localises to the cytoplasm. Its function is as follows. NAD-binding protein involved in the addition of a carboxymethylaminomethyl (cmnm) group at the wobble position (U34) of certain tRNAs, forming tRNA-cmnm(5)s(2)U34. The protein is tRNA uridine 5-carboxymethylaminomethyl modification enzyme MnmG of Vibrio parahaemolyticus serotype O3:K6 (strain RIMD 2210633).